A 464-amino-acid chain; its full sequence is Asparagine--tRNA ligase (464 aa).

The protein belongs to the class-II aminoacyl-tRNA synthetase family. In terms of assembly, homodimer.

Its subcellular location is the cytoplasm. It carries out the reaction tRNA(Asn) + L-asparagine + ATP = L-asparaginyl-tRNA(Asn) + AMP + diphosphate + H(+). This chain is Asparagine--tRNA ligase, found in Xanthomonas campestris pv. campestris (strain 8004).